Consider the following 36-residue polypeptide: U1-ectatotoxin-Et1b subunit B (36 aa).

A disulfide bridge links C11 with C33.

It belongs to the ectatomin family. Ectatomin-Et subfamily. In terms of assembly, heterodimer of subunits A and B; disulfide-linked. As to expression, expressed by the venom gland.

The protein localises to the secreted. It is found in the target cell membrane. In Ectatomma tuberculatum (Selva ant), this protein is U1-ectatotoxin-Et1b subunit B.